Reading from the N-terminus, the 170-residue chain is Neurotensin/neuromedin N (170 aa).

The signal sequence occupies residues 1–23; sequence MMAGMKIQLVCMILLAFSSWSLC.

It belongs to the neurotensin family. Interacts with NTSR1. Interacts with SORT1. Interacts with SORL1. Neurotensin is cleaved and degraded by Angiotensin-converting enzyme (ACE) and neprilysin (MME). Brain and gut.

The protein localises to the secreted. It is found in the cytoplasmic vesicle. Its subcellular location is the secretory vesicle. Neurotensin may play an endocrine or paracrine role in the regulation of fat metabolism. It causes contraction of smooth muscle. This Bos taurus (Bovine) protein is Neurotensin/neuromedin N (NTS).